Reading from the N-terminus, the 306-residue chain is D-alanine--D-alanine ligase (306 aa).

Residues 101–303 form the ATP-grasp domain; it reads KQVWQGIGLT…FSQLVVKILE (203 aa). ATP is bound at residue 134–189; it reads VADLGLPLIVKPSLEGSSVGMTKVNEISELRGALEAAFRYDVDLLVEKWLHGPEYT. Mg(2+) contacts are provided by Asp-257, Glu-270, and Asn-272.

It belongs to the D-alanine--D-alanine ligase family. Mg(2+) is required as a cofactor. Requires Mn(2+) as cofactor.

The protein localises to the cytoplasm. It carries out the reaction 2 D-alanine + ATP = D-alanyl-D-alanine + ADP + phosphate + H(+). Its pathway is cell wall biogenesis; peptidoglycan biosynthesis. Its function is as follows. Cell wall formation. This is D-alanine--D-alanine ligase from Photorhabdus laumondii subsp. laumondii (strain DSM 15139 / CIP 105565 / TT01) (Photorhabdus luminescens subsp. laumondii).